Consider the following 217-residue polypeptide: uncharacterized protein (217 aa).

The 204-residue stretch at 14 to 217 folds into the ABC transporter domain; it reads LAVNNLCIER…NELATEIISL (204 aa). Residue 46–53 participates in ATP binding; that stretch reads GEIGSGKT.

This sequence belongs to the ABC transporter superfamily.

This is an uncharacterized protein from Haemophilus influenzae (strain ATCC 51907 / DSM 11121 / KW20 / Rd).